The sequence spans 379 residues: Protein RecA (379 aa).

79–86 (GPESSGKT) serves as a coordination point for ATP.

This sequence belongs to the RecA family.

It localises to the cytoplasm. Can catalyze the hydrolysis of ATP in the presence of single-stranded DNA, the ATP-dependent uptake of single-stranded DNA by duplex DNA, and the ATP-dependent hybridization of homologous single-stranded DNAs. It interacts with LexA causing its activation and leading to its autocatalytic cleavage. This is Protein RecA from Streptococcus agalactiae.